Consider the following 263-residue polypeptide: Dihydropteroate synthase type-3 (263 aa).

Residues 2 to 257 form the Pterin-binding domain; sequence SKIFGIVNIT…DVKSLSDALK (256 aa). Residue asparagine 9 participates in Mg(2+) binding. Serine 49 lines the 4-aminobenzoate pocket. 3 residues coordinate (7,8-dihydropterin-6-yl)methyl diphosphate: aspartate 82, asparagine 101, and aspartate 172. Positions 101 and 172 each coordinate 6-hydroxymethyl-7,8-dihydropterin. Phenylalanine 177 contacts 4-aminobenzoate. Lysine 211 contacts (7,8-dihydropterin-6-yl)methyl diphosphate. Lysine 211 is a 6-hydroxymethyl-7,8-dihydropterin binding site. Serine 212 serves as a coordination point for 4-aminobenzoate. 245 to 247 contacts (7,8-dihydropterin-6-yl)methyl diphosphate; that stretch reads RTH.

This sequence belongs to the DHPS family. Requires Mg(2+) as cofactor.

The enzyme catalyses (7,8-dihydropterin-6-yl)methyl diphosphate + 4-aminobenzoate = 7,8-dihydropteroate + diphosphate. It participates in cofactor biosynthesis; tetrahydrofolate biosynthesis; 7,8-dihydrofolate from 2-amino-4-hydroxy-6-hydroxymethyl-7,8-dihydropteridine diphosphate and 4-aminobenzoate: step 1/2. In terms of biological role, catalyzes the condensation of para-aminobenzoate (pABA) with 6-hydroxymethyl-7,8-dihydropterin diphosphate (DHPt-PP) to form 7,8-dihydropteroate (H2Pte), the immediate precursor of folate derivatives. Confers resistance to sulfonamide antibiotics, including sulfamethoxazole (SMX), sulfadiazine and sulfisoxazole. The polypeptide is Dihydropteroate synthase type-3 (Escherichia coli).